A 232-amino-acid polypeptide reads, in one-letter code: Phospholipase A2 hemilipin (232 aa).

The N-terminal stretch at 1-18 (MTFLILTILATVTPSLYS) is a signal peptide. Residues 19–105 (HVVQRELRVN…QRCSGSAEGR (87 aa)) constitute a propeptide that is removed on maturation. Residues Trp115, Gly117, and Gly119 each coordinate Ca(2+). 5 cysteine pairs are disulfide-bonded: Cys116–Cys137, Cys136–Cys175, Cys143–Cys168, Cys166–Cys206, and Cys211–Cys219. Residue Asn124 is glycosylated (N-linked (GlcNAc...) asparagine). Residue His140 is part of the active site. Ca(2+) is bound at residue Asp141. The N-linked (GlcNAc...) asparagine glycan is linked to Asn157. Residues 214–217 (KRDA) constitute a propeptide that is removed on maturation.

The protein belongs to the phospholipase A2 family. Group III subfamily. In terms of assembly, heterodimer composed of a small subunit and a large subunit; disulfid-linked. Ca(2+) is required as a cofactor. As to expression, expressed by the venom gland.

It is found in the secreted. It catalyses the reaction a 1,2-diacyl-sn-glycero-3-phosphocholine + H2O = a 1-acyl-sn-glycero-3-phosphocholine + a fatty acid + H(+). Scorpion venom phospholipase A2 (PLA2) that shows high hydrolytic activities towards lecithin and acts as an effective blocker of all angiogenesis key steps in vivo and in vitro. It has no effect on apoptosis and does not display hemolytic, inflammatory or neurotoxic effects. PLA2 catalyzes the calcium-dependent hydrolysis of the 2-acyl groups in 3-sn-phosphoglycerides. This is Phospholipase A2 hemilipin from Hemiscorpius lepturus (Scorpion).